A 177-amino-acid chain; its full sequence is Large ribosomal subunit protein uL6 (177 aa).

This sequence belongs to the universal ribosomal protein uL6 family. In terms of assembly, part of the 50S ribosomal subunit.

Functionally, this protein binds to the 23S rRNA, and is important in its secondary structure. It is located near the subunit interface in the base of the L7/L12 stalk, and near the tRNA binding site of the peptidyltransferase center. This chain is Large ribosomal subunit protein uL6, found in Cereibacter sphaeroides (strain ATCC 17029 / ATH 2.4.9) (Rhodobacter sphaeroides).